A 275-amino-acid polypeptide reads, in one-letter code: Dermonecrotic toxin LamSicTox-alphaIV1ii (275 aa).

Residue histidine 5 is part of the active site. Mg(2+) contacts are provided by glutamate 25 and aspartate 27. Catalysis depends on histidine 41, which acts as the Nucleophile. Cystine bridges form between cysteine 45–cysteine 51 and cysteine 47–cysteine 192. Aspartate 85 is a binding site for Mg(2+).

Belongs to the arthropod phospholipase D family. Class II subfamily. Mg(2+) is required as a cofactor. As to expression, expressed by the venom gland.

The protein localises to the secreted. It catalyses the reaction an N-(acyl)-sphingosylphosphocholine = an N-(acyl)-sphingosyl-1,3-cyclic phosphate + choline. It carries out the reaction an N-(acyl)-sphingosylphosphoethanolamine = an N-(acyl)-sphingosyl-1,3-cyclic phosphate + ethanolamine. The enzyme catalyses a 1-acyl-sn-glycero-3-phosphocholine = a 1-acyl-sn-glycero-2,3-cyclic phosphate + choline. The catalysed reaction is a 1-acyl-sn-glycero-3-phosphoethanolamine = a 1-acyl-sn-glycero-2,3-cyclic phosphate + ethanolamine. Its function is as follows. Dermonecrotic toxins cleave the phosphodiester linkage between the phosphate and headgroup of certain phospholipids (sphingolipid and lysolipid substrates), forming an alcohol (often choline) and a cyclic phosphate. This toxin acts on sphingomyelin (SM). It may also act on ceramide phosphoethanolamine (CPE), lysophosphatidylcholine (LPC) and lysophosphatidylethanolamine (LPE), but not on lysophosphatidylserine (LPS), and lysophosphatidylglycerol (LPG). It acts by transphosphatidylation, releasing exclusively cyclic phosphate products as second products. Induces dermonecrosis, hemolysis, increased vascular permeability, edema, inflammatory response, and platelet aggregation. The chain is Dermonecrotic toxin LamSicTox-alphaIV1ii from Loxosceles amazonica (Recluse spider).